The primary structure comprises 487 residues: METVQLRNPPRRQLKKLDEDSLTKQPEEVFDVLEKLGEGSYGSVYKAIHKETGQIVAIKQVPVESDLQEIIKEISIMQQCDSPHVVKYYGSYFKNTDLWIVMEYCGAGSVSDIIRLRNKTLTEDEIATILQSTLKGLEYLHFMRKIHRDIKAGNILLNTEGHAKLADFGVAGQLTDTMAKRNTVIGTPFWMAPEVIQEIGYNCVADIWSLGITAIEMAEGKPPYADIHPMRAIFMIPTNPPPTFRKPELWSDSFMDFVKQCLVKSPEQRATATQLLQHPFVKSAKGVSILRDLINEAMDVKLKRQEAQQREVDQEEEENSEEDELDSGTMVRAAGDEMGTVRVASSMSDGANTMIEHDDTLPSQLGTMVINTEDEEEEGTMKRRDETMQPARPSFLEYFEQKEKENQINSFGKSVPGPLQNSSDWKVPQDGDYEFLKSWTVEDLQKRLLALDPMMEQEIEEIRQKYQSKRQPILDAIEAKKRRQQNF.

Met1 carries the post-translational modification N-acetylmethionine. Position 3 is a phosphothreonine (Thr3). Positions 30–281 constitute a Protein kinase domain; it reads FDVLEKLGEG…ATQLLQHPFV (252 aa). Residues 36–44 and Lys59 contribute to the ATP site; that span reads LGEGSYGSV. The active-site Proton acceptor is the Asp149. Thr183 carries the phosphothreonine; by autocatalysis modification. Phosphoserine is present on residues Ser265 and Ser320. Residues 289–327 are a coiled coil; that stretch reads ILRDLINEAMDVKLKRQEAQQREVDQEEEENSEEDELDS. Residues 305 to 332 are disordered; the sequence is QEAQQREVDQEEEENSEEDELDSGTMVR. The span at 313-326 shows a compositional bias: acidic residues; sequence DQEEEENSEEDELD. Thr340 and Thr367 each carry phosphothreonine. A Phosphothreonine; by PKB/AKT1 modification is found at Thr387. 2 positions are modified to phosphoserine: Ser410 and Ser414. A Phosphotyrosine modification is found at Tyr433. The SARAH domain maps to 433–480; the sequence is YEFLKSWTVEDLQKRLLALDPMMEQEIEEIRQKYQSKRQPILDAIEAK.

Belongs to the protein kinase superfamily. STE Ser/Thr protein kinase family. STE20 subfamily. In terms of assembly, homodimer; mediated via the coiled-coil region. Interacts with NORE1, which inhibits autoactivation. Interacts with and stabilizes SAV1. Interacts with RASSF1. Interacts with FOXO3. Interacts with RASSF2 (via SARAH domain). Interacts with AR, PKB/AKT1, TNNI3 and SIRT1. Interacts with DLG5 (via PDZ domain 3). Interacts with MARK3 and SCRIB in the presence of DLG5. Mg(2+) is required as a cofactor. Autophosphorylated on serine and threonine residues. Phosphorylation at Thr-387 by PKB/AKT1, leads to inhibition of its: kinase activity, nuclear translocation and autophosphorylation at Thr-183. It also diminishes its cleavage by caspases and its ability to phosphorylate FOXO3. Post-translationally, proteolytically cleaved by caspase-3 during apoptosis at Asp-326 and Asp-349 resulting in a 37 kDa or a 39 kDa subunit respectively. The 39 kDa subunit is further cleaved into the 37 kDa form. Proteolytic cleavage results in kinase activation and nuclear translocation of the truncated form (MST1/N). It is less likely that cleavage at Asp-349 is a prerequisite for activation as this site is not conserved in the murine ortholog.

The protein localises to the cytoplasm. Its subcellular location is the nucleus. It carries out the reaction L-seryl-[protein] + ATP = O-phospho-L-seryl-[protein] + ADP + H(+). The catalysed reaction is L-threonyl-[protein] + ATP = O-phospho-L-threonyl-[protein] + ADP + H(+). Its activity is regulated as follows. Inhibited by the C-terminal non-catalytic region. Activated by caspase-cleavage. Full activation also requires homodimerization and autophosphorylation of Thr-183. Activated by RASSF1 which acts by preventing its dephosphorylation. Its function is as follows. Stress-activated, pro-apoptotic kinase which, following caspase-cleavage, enters the nucleus and induces chromatin condensation followed by internucleosomal DNA fragmentation. Key component of the Hippo signaling pathway which plays a pivotal role in organ size control and tumor suppression by restricting proliferation and promoting apoptosis. The core of this pathway is composed of a kinase cascade wherein STK3/MST2 and STK4/MST1, in complex with its regulatory protein SAV1, phosphorylates and activates LATS1/2 in complex with its regulatory protein MOB1, which in turn phosphorylates and inactivates YAP1 oncoprotein and WWTR1/TAZ. Phosphorylation of YAP1 by LATS2 inhibits its translocation into the nucleus to regulate cellular genes important for cell proliferation, cell death, and cell migration. STK3/MST2 and STK4/MST1 are required to repress proliferation of mature hepatocytes, to prevent activation of facultative adult liver stem cells (oval cells), and to inhibit tumor formation. Phosphorylates 'Ser-14' of histone H2B (H2BS14ph) during apoptosis. Phosphorylates FOXO3 upon oxidative stress, which results in its nuclear translocation and cell death initiation. Phosphorylates MOBKL1A, MOBKL1B and RASSF2. Phosphorylates TNNI3 (cardiac Tn-I) and alters its binding affinity to TNNC1 (cardiac Tn-C) and TNNT2 (cardiac Tn-T). Phosphorylates FOXO1 on 'Ser-212' and regulates its activation and stimulates transcription of PMAIP1 in a FOXO1-dependent manner. Phosphorylates SIRT1 and inhibits SIRT1-mediated p53/TP53 deacetylation, thereby promoting p53/TP53 dependent transcription and apoptosis upon DNA damage. Acts as an inhibitor of PKB/AKT1. Phosphorylates AR on 'Ser-650' and suppresses its activity by intersecting with PKB/AKT1 signaling and antagonizing formation of AR-chromatin complexes. The protein is Serine/threonine-protein kinase 4 (STK4) of Bos taurus (Bovine).